Reading from the N-terminus, the 494-residue chain is Catalase (494 aa).

Catalysis depends on residues His-65 and Asn-138. Residue Tyr-348 coordinates heme.

It belongs to the catalase family. As to quaternary structure, homotetramer. Requires heme as cofactor.

The protein resides in the cytoplasm. The protein localises to the cytosol. It localises to the peroxisome matrix. It catalyses the reaction 2 H2O2 = O2 + 2 H2O. Catalyzes the degradation of hydrogen peroxide (H(2)O(2)) generated by peroxisomal oxidases to water and oxygen, thereby protecting cells from the toxic effects of hydrogen peroxide. The polypeptide is Catalase (Pisum sativum (Garden pea)).